The chain runs to 245 residues: Polyhedrin (245 aa).

It belongs to the polyhedrin family.

Functionally, major component of the virus occlusion bodies, which are large proteinaceous structures (polyhedra), that protect the virus from the outside environment for extended periods until they are ingested by insect larvae. This chain is Polyhedrin (PH), found in Hyphantria cunea nuclear polyhedrosis virus (HcNPV).